The following is a 298-amino-acid chain: Tyrosine recombinase XerD (298 aa).

The region spanning 3–88 (TLEHPLIDRF…GLRGFYRYCL (86 aa)) is the Core-binding (CB) domain. Residues 109 to 292 (PLPKSLSEAD…ARARLQDLHA (184 aa)) enclose the Tyr recombinase domain. Active-site residues include R149, K173, H244, R247, and H270. Y279 acts as the O-(3'-phospho-DNA)-tyrosine intermediate in catalysis.

It belongs to the 'phage' integrase family. XerD subfamily. Forms a cyclic heterotetrameric complex composed of two molecules of XerC and two molecules of XerD.

It is found in the cytoplasm. In terms of biological role, site-specific tyrosine recombinase, which acts by catalyzing the cutting and rejoining of the recombining DNA molecules. The XerC-XerD complex is essential to convert dimers of the bacterial chromosome into monomers to permit their segregation at cell division. It also contributes to the segregational stability of plasmids. This Pseudomonas aeruginosa (strain ATCC 15692 / DSM 22644 / CIP 104116 / JCM 14847 / LMG 12228 / 1C / PRS 101 / PAO1) protein is Tyrosine recombinase XerD.